We begin with the raw amino-acid sequence, 292 residues long: ATP synthase gamma chain (292 aa).

Belongs to the ATPase gamma chain family. As to quaternary structure, F-type ATPases have 2 components, CF(1) - the catalytic core - and CF(0) - the membrane proton channel. CF(1) has five subunits: alpha(3), beta(3), gamma(1), delta(1), epsilon(1). CF(0) has three main subunits: a, b and c.

It localises to the cell inner membrane. In terms of biological role, produces ATP from ADP in the presence of a proton gradient across the membrane. The gamma chain is believed to be important in regulating ATPase activity and the flow of protons through the CF(0) complex. The protein is ATP synthase gamma chain of Magnetococcus marinus (strain ATCC BAA-1437 / JCM 17883 / MC-1).